An 85-amino-acid chain; its full sequence is ATP synthase subunit c (85 aa).

Transmembrane regions (helical) follow at residues 10–30 and 53–73; these read IAVALLIGLGALGTAIGFGLL and FIVAGLLDAVTMIGVGIALFF.

Belongs to the ATPase C chain family. F-type ATPases have 2 components, F(1) - the catalytic core - and F(0) - the membrane proton channel. F(1) has five subunits: alpha(3), beta(3), gamma(1), delta(1), epsilon(1). F(0) has three main subunits: a(1), b(2) and c(10-14). The alpha and beta chains form an alternating ring which encloses part of the gamma chain. F(1) is attached to F(0) by a central stalk formed by the gamma and epsilon chains, while a peripheral stalk is formed by the delta and b chains.

The protein resides in the cell inner membrane. Functionally, f(1)F(0) ATP synthase produces ATP from ADP in the presence of a proton or sodium gradient. F-type ATPases consist of two structural domains, F(1) containing the extramembraneous catalytic core and F(0) containing the membrane proton channel, linked together by a central stalk and a peripheral stalk. During catalysis, ATP synthesis in the catalytic domain of F(1) is coupled via a rotary mechanism of the central stalk subunits to proton translocation. In terms of biological role, key component of the F(0) channel; it plays a direct role in translocation across the membrane. A homomeric c-ring of between 10-14 subunits forms the central stalk rotor element with the F(1) delta and epsilon subunits. In Pseudomonas syringae pv. syringae (strain B728a), this protein is ATP synthase subunit c.